The following is a 125-amino-acid chain: Small ribosomal subunit protein uS13 (125 aa).

It belongs to the universal ribosomal protein uS13 family. As to quaternary structure, part of the 30S ribosomal subunit. Forms a loose heterodimer with protein S19. Forms two bridges to the 50S subunit in the 70S ribosome.

Functionally, located at the top of the head of the 30S subunit, it contacts several helices of the 16S rRNA. In the 70S ribosome it contacts the 23S rRNA (bridge B1a) and protein L5 of the 50S subunit (bridge B1b), connecting the 2 subunits; these bridges are implicated in subunit movement. Contacts the tRNAs in the A and P-sites. The polypeptide is Small ribosomal subunit protein uS13 (Rickettsia massiliae (strain Mtu5)).